We begin with the raw amino-acid sequence, 301 residues long: Pyridoxal 5'-phosphate synthase subunit PdxS (301 aa).

Asp31 contributes to the D-ribose 5-phosphate binding site. The Schiff-base intermediate with D-ribose 5-phosphate role is filled by Lys88. Gly160 contributes to the D-ribose 5-phosphate binding site. Lys172 contributes to the D-glyceraldehyde 3-phosphate binding site. Residues Gly221 and Gly242–Ser243 each bind D-ribose 5-phosphate.

The protein belongs to the PdxS/SNZ family. As to quaternary structure, in the presence of PdxT, forms a dodecamer of heterodimers.

It carries out the reaction aldehydo-D-ribose 5-phosphate + D-glyceraldehyde 3-phosphate + L-glutamine = pyridoxal 5'-phosphate + L-glutamate + phosphate + 3 H2O + H(+). The protein operates within cofactor biosynthesis; pyridoxal 5'-phosphate biosynthesis. Catalyzes the formation of pyridoxal 5'-phosphate from ribose 5-phosphate (RBP), glyceraldehyde 3-phosphate (G3P) and ammonia. The ammonia is provided by the PdxT subunit. Can also use ribulose 5-phosphate and dihydroxyacetone phosphate as substrates, resulting from enzyme-catalyzed isomerization of RBP and G3P, respectively. In Methanosarcina acetivorans (strain ATCC 35395 / DSM 2834 / JCM 12185 / C2A), this protein is Pyridoxal 5'-phosphate synthase subunit PdxS.